The sequence spans 624 residues: APC membrane recruitment protein 2 (624 aa).

Disordered regions lie at residues 1-308 (MDSH…PPSE) and 342-596 (EDVG…IPVS). Over residues 74-91 (SGKKEDAGGGEAQGKDAP) the composition is skewed to basic and acidic residues. The segment covering 101–111 (SASSSVAKSHS) has biased composition (low complexity). 2 stretches are compositionally biased toward basic and acidic residues: residues 120 to 132 (GRPE…ENAE) and 247 to 258 (RRLEELCGERPD). Low complexity-rich tracts occupy residues 272 to 282 (ITGDIPITTIP) and 295 to 307 (AAAP…DPPS). The segment covering 406-416 (TGGGGGGGGGT) has biased composition (gly residues). Over residues 450-464 (NNKEEQKGREKEQHE) the composition is skewed to basic and acidic residues. Over residues 535–549 (PITTTCSLKTPSSTV) the composition is skewed to polar residues.

This sequence belongs to the Amer family.

It is found in the cell membrane. Functionally, negative regulator of the canonical Wnt signaling pathway involved in neuroectodermal patterning. Acts by specifically binding phosphatidylinositol 4,5-bisphosphate (PtdIns(4,5)P2), translocating to the cell membrane and interacting with key regulators of the canonical Wnt signaling pathway, such as components of the beta-catenin destruction complex. The protein is APC membrane recruitment protein 2 (AMER2) of Gallus gallus (Chicken).